We begin with the raw amino-acid sequence, 49 residues long: Large ribosomal subunit protein bL33B (49 aa).

The protein belongs to the bacterial ribosomal protein bL33 family.

The polypeptide is Large ribosomal subunit protein bL33B (Bacillus cereus (strain ATCC 14579 / DSM 31 / CCUG 7414 / JCM 2152 / NBRC 15305 / NCIMB 9373 / NCTC 2599 / NRRL B-3711)).